Reading from the N-terminus, the 196-residue chain is MNLIPTVIEQTSRGERAYDIYSRLLKDRIIILGSPIDDHVANSIVSQLLFLAAEDPEKDISLYINSPGGSITAGMAIYDTMQFIKPDVSTICIGMAASMGAFLLAAGAKGKRFALPNSEIMIHQPLGGVQGQATEIEIAAKRILFLRDKLNRILSENTGQPIEVIERDTDRDNFMTAEKAKEYGLIDRVLTRVDEK.

Ser-98 acts as the Nucleophile in catalysis. His-123 is a catalytic residue.

Belongs to the peptidase S14 family. As to quaternary structure, fourteen ClpP subunits assemble into 2 heptameric rings which stack back to back to give a disk-like structure with a central cavity, resembling the structure of eukaryotic proteasomes.

Its subcellular location is the cytoplasm. It carries out the reaction Hydrolysis of proteins to small peptides in the presence of ATP and magnesium. alpha-casein is the usual test substrate. In the absence of ATP, only oligopeptides shorter than five residues are hydrolyzed (such as succinyl-Leu-Tyr-|-NHMec, and Leu-Tyr-Leu-|-Tyr-Trp, in which cleavage of the -Tyr-|-Leu- and -Tyr-|-Trp bonds also occurs).. Cleaves peptides in various proteins in a process that requires ATP hydrolysis. Has a chymotrypsin-like activity. Plays a major role in the degradation of misfolded proteins. In Anoxybacillus flavithermus (strain DSM 21510 / WK1), this protein is ATP-dependent Clp protease proteolytic subunit.